The primary structure comprises 1281 residues: SCL-interrupting locus protein homolog (1281 aa).

6 stretches are compositionally biased toward polar residues: residues 390–401 (VFKQSPLPNKLS), 461–475 (RNNS…NVNN), 528–560 (HLQS…STVH), 567–592 (EQEQ…SYSR), 770–790 (SKTT…STEQ), and 891–913 (QDIN…NTAE). Disordered regions lie at residues 390–431 (VFKQ…QVSR), 450–592 (KSAS…SYSR), 765–790 (AESE…STEQ), and 879–915 (RDDA…AEID).

It is found in the cytoplasm. It localises to the cytosol. The protein localises to the cytoskeleton. Its subcellular location is the microtubule organizing center. The protein resides in the centrosome. It is found in the centriole. Plays an essential role in early embryonic development. Plays an important role in the regulation of centriole duplication. The protein is SCL-interrupting locus protein homolog (stil) of Xenopus laevis (African clawed frog).